The following is a 64-amino-acid chain: Large ribosomal subunit protein eL37 (64 aa).

Residues C20, C23, C35, and C38 each contribute to the Zn(2+) site. The segment at 20-38 (CRRCGRRAYHVRKKACAAC) adopts a C4-type zinc-finger fold.

This sequence belongs to the eukaryotic ribosomal protein eL37 family. The cofactor is Zn(2+).

Functionally, binds to the 23S rRNA. This is Large ribosomal subunit protein eL37 from Methanococcus vannielii (strain ATCC 35089 / DSM 1224 / JCM 13029 / OCM 148 / SB).